A 134-amino-acid polypeptide reads, in one-letter code: Proline-rich nuclear receptor coactivator 2 (134 aa).

Positions 1 to 74 (MGGGERYNIP…NNSNWNASLS (74 aa)) are disordered. 2 stretches are compositionally biased toward polar residues: residues 11 to 24 (DPQSRNASKNQQQH) and 52 to 61 (SAVQNGGKTK). Over residues 62–74 (SLSNNSNWNASLS) the composition is skewed to low complexity. An SH3-binding motif is present at residues 94 to 100 (SEPPSPS).

This sequence belongs to the PNRC family. PNRC2 subfamily. Interacts with UPF1/RENT1; preferentially interacts with hyperphosphorylated form. Interacts with DCP1A. Interacts with many nuclear receptors including ESR1, ESRRA, ESRRG, NR3C1/GR, NR5A1, PGR, TR, RAR and RXR.

The protein localises to the nucleus. Its subcellular location is the cytoplasm. It is found in the P-body. Functionally, involved in nonsense-mediated mRNA decay (NMD) by acting as a bridge between the mRNA decapping complex and the NMD machinery. May act by targeting the NMD machinery to the P-body and recruiting the decapping machinery to aberrant mRNAs. Required for UPF1/RENT1 localization to the P-body. Plays a role in glucocorticoid receptor-mediated mRNA degradation by interacting with the glucocorticoid receptor NR3C1 in a ligand-dependent manner when it is bound to the 5' UTR of target mRNAs and recruiting the RNA helicase UPF1 and the mRNA-decapping enzyme DCP1A, leading to RNA decay. Also acts as a nuclear receptor coactivator. May play a role in controlling the energy balance between energy storage and energy expenditure. The polypeptide is Proline-rich nuclear receptor coactivator 2 (Pnrc2) (Rattus norvegicus (Rat)).